We begin with the raw amino-acid sequence, 429 residues long: MRVLILGSGVIGVTSAWYLAQAGCEVTVVDRQPAAALETSYANAGQLSFGYTSPWAAPGVPGKAVKWLFEQHAPLSIRPTRDLRQLAWLSQMLRNCTAERYAVNKARMVRMSDYSRDCLNALRAETGIEFEGRQLGTTQLFRTQQQLDAAAQDIEVLAQYGVPYELLSPAQIAQFEPGLAGGGAQMAGALRLPEDQTGDCRLFTQRLAELAAQAGVTFRYGQQIERLEHAGGQVSGVQIDGRMETADRYVLALGSYSADLLLSLGLHLPVYPLKGYSLTIPIVDAQRAPTSTVLDESYKIALTRFDDRIRVGGMAEVAGFDLSLNPRRRATLEMVVNDLFPGGGDLAQAEFWTGLRPATPDGTPVVGATPYANLFLNTGHGTLGWTMACGSGRYLADLMQGRTPEIDTEGLDVFRYLSPRSARAQREAA.

3–17 (VLILGSGVIGVTSAW) lines the FAD pocket.

It belongs to the DadA oxidoreductase family. The cofactor is FAD.

The enzyme catalyses a D-alpha-amino acid + A + H2O = a 2-oxocarboxylate + AH2 + NH4(+). It functions in the pathway amino-acid degradation; D-alanine degradation; NH(3) and pyruvate from D-alanine: step 1/1. In terms of biological role, oxidative deamination of D-amino acids. In Xanthomonas euvesicatoria pv. vesicatoria (strain 85-10) (Xanthomonas campestris pv. vesicatoria), this protein is D-amino acid dehydrogenase.